Here is a 230-residue protein sequence, read N- to C-terminus: Nicotinamide riboside kinase (230 aa).

12–20 serves as a coordination point for ATP; it reads GASCSGKST. Mg(2+) is bound by residues serine 19 and aspartate 38. The Proton acceptor role is filled by aspartate 38. Substrate is bound by residues 38 to 41 and 56 to 57; these read DDFY and WD. Arginine 153 is a binding site for ATP. Substrate-binding positions include arginine 154 and 159–160; that span reads GY. Residues 157–159 and 203–205 contribute to the ATP site; these read RTG and RIQ.

Belongs to the uridine kinase family. NRK subfamily.

It carries out the reaction beta-nicotinamide D-riboside + ATP = beta-nicotinamide D-ribonucleotide + ADP + H(+). It catalyses the reaction beta-D-ribosylnicotinate + ATP = nicotinate beta-D-ribonucleotide + ADP + H(+). Its pathway is cofactor biosynthesis; NAD(+) biosynthesis. Functionally, catalyzes the phosphorylation of nicotinamide riboside (NR) and nicotinic acid riboside (NaR) to form nicotinamide mononucleotide (NMN) and nicotinic acid mononucleotide (NaMN). The sequence is that of Nicotinamide riboside kinase (nrk1) from Schizosaccharomyces pombe (strain 972 / ATCC 24843) (Fission yeast).